The sequence spans 105 residues: Large ribosomal subunit protein uL24 (105 aa).

It belongs to the universal ribosomal protein uL24 family. In terms of assembly, part of the 50S ribosomal subunit.

Functionally, one of two assembly initiator proteins, it binds directly to the 5'-end of the 23S rRNA, where it nucleates assembly of the 50S subunit. Its function is as follows. One of the proteins that surrounds the polypeptide exit tunnel on the outside of the subunit. The polypeptide is Large ribosomal subunit protein uL24 (Xanthobacter autotrophicus (strain ATCC BAA-1158 / Py2)).